Consider the following 252-residue polypeptide: Small ribosomal subunit protein uS3 (252 aa).

Residues 39 to 111 enclose the KH type-2 domain; that stretch reads IRKLINNFAK…EVNLNVLEVK (73 aa). Positions 222 to 252 are disordered; the sequence is KPFASQSSNTPNRRPRNFKGGNNNHVNAKKN. The span at 241-252 shows a compositional bias: polar residues; it reads GGNNNHVNAKKN.

Belongs to the universal ribosomal protein uS3 family. Part of the 30S ribosomal subunit. Forms a tight complex with proteins S10 and S14.

Functionally, binds the lower part of the 30S subunit head. Binds mRNA in the 70S ribosome, positioning it for translation. This chain is Small ribosomal subunit protein uS3, found in Phytoplasma sp. (strain STRAWB2).